Consider the following 1333-residue polypeptide: Inner capsid protein VP1 (1333 aa).

Residues 1–10 (MHSTTNNSNK) show a composition bias toward polar residues. The disordered stretch occupies residues 1-93 (MHSTTNNSNK…MDMEKAAETT (93 aa)). A compositionally biased stretch (basic and acidic residues) spans 11-20 (RNNEEKHKQP). Polar residues predominate over residues 64–82 (DGASRSGTNAKVATASSAR).

The protein belongs to the turreted BTV-fold inner capsid family. Homodecamer; each decamer is made up of two conformers of VP2, called VP2A and VP2B. 12 homodecamers assemble to form an icosahedral capsid.

It localises to the virion. Its function is as follows. Inner capsid protein that self-assembles to form an icosahedral capsid with a T=2 symmetry, which consists of 120 copies of VP2, with channels at each of its five-fold vertices. This capsid constitutes the innermost concentric layer of the viral mature particle. This chain is Inner capsid protein VP1 (S1), found in Lymantria dispar cypovirus 1 (isolate Rao) (LdCPV-1).